The sequence spans 113 residues: MNFYLLLASSILCALIVFWKYRRFQRNTGEMSSNSTALALVRPSSSGLINSNTDNNLAVYDLSRDILNNFPHSIARQKRILVNLSMVENKLVELEHTLLSKGFRGASPHRKST.

Residues methionine 1–phenylalanine 3 are Cytoplasmic-facing. The chain crosses the membrane as a helical; Signal-anchor for type II membrane protein span at residues tyrosine 4–tyrosine 21. Residues arginine 22–threonine 113 lie on the Extracellular side of the membrane. A glycan (N-linked (GlcNAc...) asparagine) is linked at asparagine 83.

Specifically expressed in testis. Expressed by cancer cell lines.

The protein resides in the cell membrane. This Homo sapiens (Human) protein is Kita-kyushu lung cancer antigen 1 (CT83).